Consider the following 209-residue polypeptide: Probable calcium-binding protein CML36 (209 aa).

The disordered stretch occupies residues 22 to 59; sequence SKSPTAFSFGSASSSSGQDCKNSGGDGGGGSVTPTSIL. Positions 27 to 38 are enriched in low complexity; sequence AFSFGSASSSSG. EF-hand domains are found at residues 66–101, 103–138, 139–174, and 176–209; these read YSYV…LGPD, LTEE…LDPA, RDST…IGDE, and CTLD…DLQR. Asp79, Asp81, Asp83, and Asp90 together coordinate Ca(2+). Residues Asp152, Asp154, Asp156, Glu163, Asp189, Asp191, Asp193, and Glu200 each contribute to the Ca(2+) site.

Its function is as follows. Potential calcium sensor. This is Probable calcium-binding protein CML36 (CML36) from Arabidopsis thaliana (Mouse-ear cress).